A 705-amino-acid chain; its full sequence is Gamma-adducin (705 aa).

Over residues 1–10 (MSSDTSQAVI) the composition is skewed to polar residues. A disordered region spans residues 1–22 (MSSDTSQAVITTPPPPSMPHKE). Residue Ser-2 is modified to N-acetylserine. Ser-31, Ser-42, Ser-64, Ser-402, Ser-414, Ser-423, Ser-442, and Ser-461 each carry phosphoserine. 4 disordered regions span residues 472–495 (EDPS…VPLN), 535–556 (PSTM…PFSH), 572–612 (KQQG…EENH), and 658–705 (EITI…KVEA). Residue Lys-484 forms a Glycyl lysine isopeptide (Lys-Gly) (interchain with G-Cter in SUMO2) linkage. Ser-583, Ser-585, Ser-590, Ser-672, Ser-676, Ser-678, and Ser-680 each carry phosphoserine. The segment covering 590–605 (SVSQIQSQTQSPQSVP) has biased composition (low complexity). Residues 681–705 (PSKKKKKFRTPSFLKKNKKKEKVEA) show a composition bias toward basic residues. Ser-682 carries the phosphoserine; by PKC modification. The interaction with calmodulin stretch occupies residues 683 to 700 (KKKKKFRTPSFLKKNKKK).

It belongs to the aldolase class II family. Adducin subfamily. Heterodimer of an alpha and a gamma subunit. Sumoylated. In terms of processing, proteolytically cleaved by asparagine endopeptidase (AEP) into 2 fragments. Overexpression of the 1-357 fragment induces neuronal apoptosis, and overexpression of either 1-357 or 358-706 fragment increases the degeneration of dendritic spines. Overexpression of the 1-357 fragment impairs neurite outgrowth by downregulating the expression of Rac2, and induces synaptic dysfunction and cognitive impairments in tau P301S transgenic mice, a mouse model for Alzheimer disease (AD). In terms of tissue distribution, expressed in kidney, brain, spleen, liver and heart. As to expression, expressed in renal interlobular arteries, afferent/efferent arterioles, parietal glomerular epithelial cells and microvilli of the luminal surface of the proximal tubule (at protein level). Expressed in podocytes (at protein level) Expressed in renal cortex (at protein level). Expressed in primary vascular smooth muscle cells (VSMCs) of the kidney (at protein level). Expressed in tubular cells and glomeruli (at protein level).

The protein localises to the cytoplasm. The protein resides in the cytoskeleton. It localises to the cell membrane. In terms of biological role, membrane-cytoskeleton-associated protein that promotes the assembly of the spectrin-actin network. Plays a role in actin filament capping. Binds to calmodulin. Involved in myogenic reactivity of the renal afferent arteriole (Af-art), renal interlobular arteries and middle cerebral artery (MCA) to increased perfusion pressure. Involved in regulation of potassium channels in the vascular smooth muscle cells (VSMCs) of the Af-art and MCA ex vivo. Involved in regulation of glomerular capillary pressure, glomerular filtration rate (GFR) and glomerular nephrin expression in response to hypertension. Involved in renal blood flow (RBF) autoregulation. Plays a role in podocyte structure and function. Regulates globular monomer actin (G-actin) and filamentous polymer actin (F-actin) ratios in the primary podocytes affecting actin cytoskeleton organization. Regulates expression of synaptopodin, RhoA, Rac1 and CDC42 in the renal cortex and the primary podocytes. Regulates expression of nephrin in the glomeruli and in the primary podocytes, expression of nephrin and podocinin in the renal cortex, and expression of focal adhesion proteins integrin alpha-3 and integrin beta-1 in the glomeruli. Involved in cell migration and cell adhesion of podocytes, and in podocyte foot process effacement. Regulates expression of profibrotics markers MMP2, MMP9, TGF beta-1, tubular tight junction protein E-cadherin, and mesenchymal markers vimentin and alpha-SMA. Promotes the growth of neurites. The polypeptide is Gamma-adducin (Add3) (Rattus norvegicus (Rat)).